The following is a 238-amino-acid chain: Large ribosomal subunit protein bL25 (238 aa).

A compositionally biased stretch (basic and acidic residues) spans M1–A10. Residues M1–E24 are disordered.

Belongs to the bacterial ribosomal protein bL25 family. CTC subfamily. Part of the 50S ribosomal subunit; part of the 5S rRNA/L5/L18/L25 subcomplex. Contacts the 5S rRNA. Binds to the 5S rRNA independently of L5 and L18.

This is one of the proteins that binds to the 5S RNA in the ribosome where it forms part of the central protuberance. This Bradyrhizobium diazoefficiens (strain JCM 10833 / BCRC 13528 / IAM 13628 / NBRC 14792 / USDA 110) protein is Large ribosomal subunit protein bL25.